Reading from the N-terminus, the 343-residue chain is Dihydroorotase (343 aa).

Zn(2+) is bound by residues His-13 and His-15. Substrate-binding positions include 15–17 and Asn-41; that span reads HLR. The Zn(2+) site is built by Lys-99, His-136, and His-174. Lys-99 is modified (N6-carboxylysine). His-136 contributes to the substrate binding site. Leu-219 serves as a coordination point for substrate. Asp-247 is a binding site for Zn(2+). Asp-247 is an active-site residue. Substrate is bound by residues His-251 and Ala-263.

Belongs to the metallo-dependent hydrolases superfamily. DHOase family. Class II DHOase subfamily. Homodimer. The cofactor is Zn(2+).

It catalyses the reaction (S)-dihydroorotate + H2O = N-carbamoyl-L-aspartate + H(+). The protein operates within pyrimidine metabolism; UMP biosynthesis via de novo pathway; (S)-dihydroorotate from bicarbonate: step 3/3. Catalyzes the reversible cyclization of carbamoyl aspartate to dihydroorotate. The chain is Dihydroorotase from Shewanella baltica (strain OS155 / ATCC BAA-1091).